The following is a 466-amino-acid chain: Soluble pyridine nucleotide transhydrogenase (466 aa).

36–45 (EKESSVGGGC) contacts FAD.

The protein belongs to the class-I pyridine nucleotide-disulfide oxidoreductase family. The cofactor is FAD.

The protein resides in the cytoplasm. The enzyme catalyses NAD(+) + NADPH = NADH + NADP(+). Its function is as follows. Conversion of NADPH, generated by peripheral catabolic pathways, to NADH, which can enter the respiratory chain for energy generation. The protein is Soluble pyridine nucleotide transhydrogenase of Vibrio atlanticus (strain LGP32) (Vibrio splendidus (strain Mel32)).